A 168-amino-acid chain; its full sequence is Pleiotrophin (168 aa).

The first 32 residues, 1–32 (MSSQQYQQQRRKFAAAFLALIFILAAVDTAEA), serve as a signal peptide directing secretion. Intrachain disulfides connect Cys-47/Cys-76, Cys-55/Cys-85, Cys-62/Cys-89, Cys-99/Cys-131, and Cys-109/Cys-141. Chondroitin sulfate binding regions lie at residues 92–99 (KKQFGAEC) and 123–131 (KRALHNADC). The disordered stretch occupies residues 139-168 (KPCGKLTKPKPQAESKKKKKEGKKQEKMLD). Residues 147–168 (PKPQAESKKKKKEGKKQEKMLD) form a chondroitin sulfate A binding region.

Belongs to the pleiotrophin family. As to quaternary structure, interacts with ALK and NEK6. Interacts with PTPRZ1 (via chondroitin sulfate groups); promotes formation of homooligomers; oligomerization impairs tyrosine phosphatase activity. Forms a complex with PTPRZ1 and CTNNB1; this complex inactivates PTPRZ1 protein tyrosine phosphatase activity through PTN interaction and stimulates tyrosine phosphorylation of CTNNB1. Interacts with ITGB3 and ITGA5. Forms a complex with PTPRZ1 and integrin alpha-V/beta-3 (ITGAV:ITGB3) that stimulates endothelial cell migration through ITGB3 'Tyr-773' phosphorylation. Interacts with SDC3 (via heparan sulfate chains); this interaction mediates the neurite outgrowth-promoting signal from PTN to the cytoskeleton of growing neurites; this interaction mediates osteoblast recruitment. Interacts with GPC2 (via heparan sulfate); this interaction promotes neurite outgrowth through binding of PTN with chondroitin sulfate of proteoglycans, thereby releasing PTPRS of chondroitin sulfate proteoglycans (CSPGs) and leading to binding with heparan sulfate of GPC2. In terms of processing, phosphorylated by NEK6. As to expression, osteoblast and brain. Expressed in the follicular epithelium and granulosa cells of the ovary. Strongly expressed in the uterus of newborn mice, and the degree of expression decreased in one-week-old mice, although the expression continues even in the uteri of adult mice. Expression gradually increases from proestrus to estrus, then decreases sharply, and thereafter gradually increased again. strongly expressed in the cochlea of WT mice 1 week after birth, and then the expression decreased and was undetectable by week 8 after birth. Expressed around the cell soma of osteocytes and apparently captured in the unmineralized interstitial matrix surrounding the cells. Furthermore distributed throughout the intraosseous canalicular porosity, being localized in the unmineralized matrix around the cell processes. Strongly expressed in the innermost layer of the periosteum.

The protein localises to the secreted. Functionally, secreted growth factor that mediates its signal through cell-surface proteoglycan and non-proteoglycan receptors. Binds cell-surface proteoglycan receptor via their chondroitin sulfate (CS) groups. Thereby regulates many processes like cell proliferation, cell survival, cell growth, cell differentiation and cell migration in several tissues namely neuron and bone. Also plays a role in synaptic plasticity and learning-related behavior by inhibiting long-term synaptic potentiation. Binds PTPRZ1, leading to neutralization of the negative charges of the CS chains of PTPRZ1, inducing PTPRZ1 clustering, thereby causing the dimerization and inactivation of its phosphatase activity leading to increased tyrosine phosphorylation of each of the PTPRZ1 substrates like ALK or AFAP1L2 in order to activate the PI3K-AKT pathway. Through PTPRZ1 binding controls oligodendrocyte precursor cell differentiation by enhancing the phosphorylation of AFAP1L2 in order to activate the PI3K-AKT pathway. Forms a complex with PTPRZ1 and integrin alpha-V/beta-3 (ITGAV:ITGB3) that stimulates endothelial cell migration through SRC dephosphorylation and activation that consequently leads to ITGB3 'Tyr-773' phosphorylation. In adult hippocampus promotes dendritic arborization, spine development, and functional integration and connectivity of newborn granule neurons through ALK by activating AKT signaling pathway. Binds GPC2 and chondroitin sulfate proteoglycans (CSPGs) at the neuron surface, leading to abrogation of binding between PTPRS and CSPGs and neurite outgrowth promotion. Binds SDC3 and mediates bone formation by recruiting and attaching osteoblasts/osteoblast precursors to the sites for new bone deposition. Binds ALK and promotes cell survival and cell proliferation through MAPK pathway activation. Inhibits proliferation and enhances differentiation of neural stem cells by inhibiting FGF2-induced fibroblast growth factor receptor signaling pathway. Mediates regulatory mechanisms in normal hemostasis and in hematopoietic regeneration and in maintaining the balance of myeloid and lymphoid regeneration. In addition may play a role in the female reproductive system, auditory response and the progesterone-induced decidualization pathway. This chain is Pleiotrophin, found in Mus musculus (Mouse).